Consider the following 174-residue polypeptide: Co-chaperone protein HscB homolog (174 aa).

In terms of domain architecture, J spans 2-74 (NYFELFKFSP…IRRAEHMLSL (73 aa)).

Belongs to the HscB family. As to quaternary structure, interacts with HscA and stimulates its ATPase activity.

In terms of biological role, co-chaperone involved in the maturation of iron-sulfur cluster-containing proteins. Seems to help targeting proteins to be folded toward HscA. The sequence is that of Co-chaperone protein HscB homolog from Shewanella baltica (strain OS223).